A 352-amino-acid polypeptide reads, in one-letter code: Protein TIFY 6B (352 aa).

Residues methionine 1–serine 71 form a disordered region. The segment covering valine 17–arginine 26 has biased composition (basic and acidic residues). Over residues methionine 34–proline 54 the composition is skewed to polar residues. The Tify domain occupies proline 172–asparagine 207. The Jas motif lies at proline 302–tyrosine 326. A Nuclear localization signal motif is present at residues alanine 304–arginine 311.

Belongs to the TIFY/JAZ family. As to quaternary structure, homo- and heterodimer. Interacts with COI1, MYC2, MYC3, MYC4, TIFY10A/JAZ1, TIFY10B/JAZ2, TIFY6A/JAZ4, TIFY5A/JAZ8, TIFY7/JAZ9, TIFY9/JAZ10 and TIFY3A/JAZ11. Interacts (via TIFY domain) with AFPH2/NINJA. Ubiquitinated. Targeted for degradation by the SCF(COI1) E3 ubiquitin ligase-proteasome pathway during jasmonate signaling. In terms of tissue distribution, srtongly expressed in root tips.

It localises to the nucleus. Its function is as follows. Repressor of jasmonate responses. Jasmonoyl-isoleucine (JA-Ile) specifically promotes COI1-TIFY6B/JAZ3 interaction. Acts as a negative regulator of MYC2 function. Feed-back regulated by MYC2. This Arabidopsis thaliana (Mouse-ear cress) protein is Protein TIFY 6B (TIFY6B).